The primary structure comprises 1188 residues: MGPRKKSVKTCIMNNEIPEEMTADETKDYMNQLSHEVLCHIFRYLPLQDIMCMECLSRKLKEAVTLYLRVVRVVDLCAGRWWEYMPSGFTDASFLTLLKKMPDVEQLYGLHPRYLERRRVRGHEAFSIPGVLEALQACPNLVGVETSHLELVESIWTYMPHVHILGKFRNRNGAFPIPPENKLKIPIGAKIQTLHLVGVNVPEIPCIPMLRHLYMKWVRLTKPQPFKDFLCISLRTFVMRNCAGPTNSLKYVPLVTGLASARNLEHLEMVRVPFLGGLIQHVVEDSWRSGGFRNLHTIVLGACKNALEVDLGYLIITAARRLHEVRIQPSLTKDGVFSALKMAELEFPQFETLHLGYVDEFLLQSRMANADLVKYGLADVVENPGIITDIGMKAVNEVFSCIKYLAIYNCPHLHNPYNWISDHSRWTRLVDINLVRCHALKLDSFGQFIELLPSLEFISLDQMFREPPKGCARVGLSAGTGIGVSSALVSNQNSNNDDNNAQNNNANIHDNNHHHPDDSDEENDFRQDLQPGEQQFAADALNEMEDIVQEDGEVVAESGNNTPAHSQAIIPVDVDEEQAGPSGLQRVVKPTSITVHDSESDDEEDSLELQEVWIPKNGTRRYSEREEKTGESVQSRELSVSGKGKTPLRKRYNSHQMGQSKQFPLEESSCEKGCQVTSEQIKADMKAARDIPEKKKNKDVYPSCSSTTASTVGNSSSHNTASQSPDFVRTVNSGGSSEPSPTEVDVSRQCACSPGGSEDSEAMEEGDAESSVCPRCCCHRPQESQRRTSRCSDEERPSTSRACVVNGPDGTRSAFSFRTLPQGGSSGPAHDERTNGSGSGATGEDRRGSSQPESCDVQSNEDYPRRPLTRARSRLSHVLLVSESEVAKTKPRHAMKRKRTADKSTSTSDPVIEDDHVQVLVLKSKNLVGVTMTNCGITDLVLKDCPKMMFIHATRCRVLKHLKVENAPIVNRFDYAQCKKLNMDQVLDQILRMPPERNRIIYLRPMQQVDTLTLEQKLFSGPYPYHICIIHEFSNPPNVRNKVRIRSWMDTIANINQELIKYEFFPEATRSEEDLKKYPKYPWGREIYTLEGVVDGAPYSMISDFPWLRSLRAAEPNSFARYDFEDDEESTIYAPRRKGQLSADICMETIGEEISEMRQMKKGVFQRVVAIFIHYCDVNGEPVEDDYI.

The F-box domain occupies 30–75; it reads MNQLSHEVLCHIFRYLPLQDIMCMECLSRKLKEAVTLYLRVVRVVD. Residues 59 to 119 form an interaction with KLF7 region; sequence KLKEAVTLYL…LHPRYLERRR (61 aa). 3 short sequence motifs (nuclear export signal) span residues 194–201, 307–316, and 451–460; these read LHLVGVNV, LEVDLGYLII, and LLPSLEFISL. The interval 487-526 is disordered; sequence ALVSNQNSNNDDNNAQNNNANIHDNNHHHPDDSDEENDFR. Low complexity predominate over residues 491–509; that stretch reads NQNSNNDDNNAQNNNANIH. A Phosphothreonine modification is found at T591. S598, S600, and S606 each carry phosphoserine. 3 disordered regions span residues 620 to 666, 685 to 766, and 787 to 909; these read RRYS…FPLE, MKAA…MEEG, and RTSR…STSD. Composition is skewed to basic and acidic residues over residues 621 to 630 and 685 to 699; these read RYSEREEKTG and MKAA…KNKD. A compositionally biased stretch (polar residues) spans 703 to 740; sequence SCSSTTASTVGNSSSHNTASQSPDFVRTVNSGGSSEPS. Phosphoserine occurs at positions 736 and 740. The span at 787–798 shows a compositional bias: basic and acidic residues; sequence RTSRCSDEERPS. The segment covering 849-861 has biased composition (polar residues); that stretch reads SSQPESCDVQSNE. The span at 889-900 shows a compositional bias: basic residues; sequence TKPRHAMKRKRT. A Nuclear localization signal motif is present at residues 896-899; sequence KRKR.

In terms of assembly, part of the SCF (SKP1-CUL1-F-box) E3 ubiquitin-protein ligase complex SCF(FBXO38) composed of CUL1, SKP1, RBX1 and FBXO38. Interacts with KLF7. Interacts with PDCD1/PD-1.

The protein resides in the cytoplasm. The protein localises to the cytosol. It is found in the nucleus. Its pathway is protein modification; protein ubiquitination. In terms of biological role, substrate recognition component of a SCF (SKP1-CUL1-F-box protein) E3 ubiquitin-protein ligase complex which mediates the ubiquitination and subsequent proteasomal degradation of PDCD1/PD-1, thereby regulating T-cells-mediated immunity. Required for anti-tumor activity of T-cells by promoting the degradation of PDCD1/PD-1; the PDCD1-mediated inhibitory pathway being exploited by tumors to attenuate anti-tumor immunity and facilitate tumor survival. May indirectly stimulate the activity of transcription factor KLF7, a regulator of neuronal differentiation, without promoting KLF7 ubiquitination. This chain is F-box only protein 38, found in Homo sapiens (Human).